The primary structure comprises 67 residues: Alpha-like toxin Lqh3 (67 aa).

Residues 2-66 (RDGYIAQPEN…GIIVEGEKCH (65 aa)) form the LCN-type CS-alpha/beta domain. 4 cysteine pairs are disulfide-bonded: Cys-12-Cys-65, Cys-16-Cys-37, Cys-23-Cys-47, and Cys-27-Cys-49. Position 67 is a serine amide (Ser-67).

This sequence belongs to the long (4 C-C) scorpion toxin superfamily. Sodium channel inhibitor family. Alpha subfamily. As to quaternary structure, monomer. Expressed by the venom gland.

The protein resides in the secreted. Functionally, alpha toxins bind voltage-independently at site-3 of sodium channels (Nav) and inhibit the inactivation of the activated channels, thereby blocking neuronal transmission. The dissociation is voltage-dependent. This alpha-like toxin is highly toxic to insects and competes with LqhaIT on binding to insect sodium channels. Differs from classical anti-mammalian alpha-toxins as it inhibits sodium channel inactivation in cell bodies of hippocampus brain neurons, on which the anti-mammalian Lqh2 is inactive, and is unable to affect Nav1.2 in the rat brain, on which Lqh2 is highly active. Moreover, its pharmacological properties are unique in that its binding affinity for insect channels drops &gt;30-fold at pH 8.5 versus pH 6.5, and its rate of association with receptor site-3 on both insect and mammalian sodium channels is 4-15-fold slower compared with LqhaIT and Lqh2. The polypeptide is Alpha-like toxin Lqh3 (Leiurus hebraeus (Hebrew deathstalker scorpion)).